A 402-amino-acid chain; its full sequence is Omega-3 fatty acid desaturase fat-1 (402 aa).

4 helical membrane-spanning segments follow: residues 79–99 (LVQDFAALTILYFALPAFEYF), 101–121 (LFGYLVWNIFMGVFGFALFVV), 235–255 (CVISGICCCVCAYIALTIAGS), and 260–280 (FWYYWVPLSFFGLMLVIVTYL).

The protein belongs to the fatty acid desaturase type 1 family.

It is found in the membrane. The enzyme catalyses (9Z,12Z)-octadecadienoyl-CoA + 2 Fe(II)-[cytochrome b5] + O2 + 2 H(+) = (9Z,12Z,15Z)-octadecatrienoyl-CoA + 2 Fe(III)-[cytochrome b5] + 2 H2O. The catalysed reaction is (8Z,11Z,14Z)-eicosatrienoyl-CoA + 2 Fe(II)-[cytochrome b5] + O2 + 2 H(+) = (8Z,11Z,14Z,17Z)-eicosatetraenoyl-CoA + 2 Fe(III)-[cytochrome b5] + 2 H2O. It catalyses the reaction (5Z,8Z,11Z,14Z)-eicosatetraenoyl-CoA + 2 Fe(II)-[cytochrome b5] + O2 + 2 H(+) = (5Z,8Z,11Z,14Z,17Z)-eicosapentaenoyl-CoA + 2 Fe(III)-[cytochrome b5] + 2 H2O. It carries out the reaction (7Z,10Z,13Z,16Z)-docosatetraenoyl-CoA + 2 Fe(II)-[cytochrome b5] + O2 + 2 H(+) = (7Z,10Z,13Z,16Z,19Z)-docosapentaenoyl-CoA + 2 Fe(III)-[cytochrome b5] + 2 H2O. The enzyme catalyses (6Z,9Z,12Z)-octadecatrienoyl-CoA + 2 Fe(II)-[cytochrome b5] + O2 + 2 H(+) = (6Z,9Z,12Z,15Z)-octadecatetraenoyl-CoA + 2 Fe(III)-[cytochrome b5] + 2 H2O. It functions in the pathway lipid metabolism; polyunsaturated fatty acid biosynthesis. Omega-3 fatty acid desaturase that recognizes a range of 18- and 20-carbon omega-6 substrates. Introduces a double bond in the fatty acid chain three carbons away from terminal methyl group to biosynthesize n-3 (omega-3) polyunsaturated fatty acids (PUFAs) endogenously (PUFAs are essential for membrane structure and many cellular and physiological processes). Acts on a number of substrates like linoleoyl-CoA ((9Z,12Z)-octadecadienoyl-CoA, 18:2n-6), dihomo-gamma-linolenoyl-CoA ((8Z,11Z,14Z)-eicosatrienoyl-CoA, 20:3n-6), and arachidonoyl-CoA ((5Z,8Z,11Z,14Z)-eicosatetraenoyl-CoA, 20:4n-6), to generate alpha-linolenoyl-CoA ((9Z,12Z,15Z)-octadecatrienoyl-CoA, 18:3n-3), (8Z,11Z,14Z,17Z)-eicosatetraenoyl-CoA (20:4n-3) and (5Z,8Z,11Z,14Z,17Z)-eicosapentaenoyl-CoA (20:5n-3) respectively. Unlike plants, Caenorhabditis elegans desaturases seem to use fatty acyl-CoAs as substrates. This Caenorhabditis elegans protein is Omega-3 fatty acid desaturase fat-1 (fat-1).